We begin with the raw amino-acid sequence, 504 residues long: Cytochrome P450 monooxygenase gliF (504 aa).

A helical transmembrane segment spans residues 13–31 (AVAVSFGVGLLYWVYRLLL). Asn-197 and Asn-299 each carry an N-linked (GlcNAc...) asparagine glycan. Cys-449 serves as a coordination point for heme.

It belongs to the cytochrome P450 family. Requires heme as cofactor.

It is found in the membrane. The protein operates within mycotoxin biosynthesis. Its function is as follows. Cytochrome P450 monooxygenase; part of the gene cluster that mediates the biosynthesis of gliotoxin, a member of the epipolythiodioxopiperazine (ETP) class of toxins characterized by a disulfide bridged cyclic dipeptide. The first step in gliotoxin biosynthesis is the condensation of serine and phenylalanine to form the cyclo-L-phenylalanyl-L-serine diketopiperazine (DKP) by the NRPS gliP. GliP is also able to produce the DKP cyclo-L-tryptophanyl-L-serine, suggesting that the substrate specificity of the first adenylation (A) domain in gliP is sufficiently relaxed to accommodate both L-Phe and L-Trp. The cytochrome P450 monooxygenase gliC has been shown to catalyze the subsequent hydroxylation of the alpha-carbon of L-Phe in cyclo-L-phenylalanyl-L-serine whereas the second cytochrome P450 enzyme, gliF, is presumably involved in the modification of the DKP side chain. The glutathione S-transferase (GST) gliG then forms a bis-glutathionylated biosynthetic intermediate which is responsible for the sulfurization of gliotoxin. This bis-glutathionylated intermediate is subsequently processed by the gamma-glutamyl cyclotransferase gliK to remove both gamma-glutamyl moieties. Subsequent processing via gliI yields a biosynthetic intermediate, which is N-methylated via the N-methyltransferase gliN, before the gliotoxin oxidoreductase gliT-mediated disulfide bridge closure. GliN-mediated amide methylation confers stability to ETP, damping the spontaneous formation of tri- and tetrasulfides. Intracellular dithiol gliotoxin oxidized by gliT is subsequently effluxed by gliA. Gliotoxin contributes to pathogenesis during invasive aspergillosis. In macrophages and neutrophils, gliotoxin showed inhibition of various different cell functions including cytokine production, antigen presentation, phagocytosis, and production of reactive oxygen species. This chain is Cytochrome P450 monooxygenase gliF, found in Aspergillus fumigatus (strain ATCC MYA-4609 / CBS 101355 / FGSC A1100 / Af293) (Neosartorya fumigata).